The chain runs to 375 residues: CLIP domain-containing serine protease B14 (375 aa).

The N-terminal stretch at 1-24 is a signal peptide; it reads MYSRRYVACGLLCLLVIAIDQGHG. The region spanning 29 to 83 is the Clip domain; that stretch reads PCTTPNGTAGRCVRVRECGYVLDLLRKDLFAHSDTVHLEGLQCGTRPDGGALVCC. Cystine bridges form between Cys30-Cys82, Cys40-Cys71, and Cys46-Cys83. Asn34 carries N-linked (GlcNAc...) asparagine glycosylation. Positions 101 to 370 constitute a Peptidase S1 domain; the sequence is IIGGNDTELG…YMGWLEREMF (270 aa). Asn105 carries an N-linked (GlcNAc...) asparagine glycan. A disulfide bridge connects residues Cys131 and Cys147. Active-site charge relay system residues include His146 and Asp213. An N-linked (GlcNAc...) asparagine glycan is attached at Asn238. 2 cysteine pairs are disulfide-bonded: Cys289-Cys307 and Cys317-Cys346. The active-site Charge relay system is the Ser321. Asn357 is a glycosylation site (N-linked (GlcNAc...) asparagine).

Belongs to the peptidase S1 family. CLIP subfamily. In terms of processing, N-glycosylated. Post-translationally, proteolytically cleaved. Expressed by a subpopulation of hemocytes.

Its subcellular location is the secreted. Functionally, serine protease. Plays a role in innate immunity against infections by parasite P.berghei and by Gram-negative bacteria such as E.coli. In response to P.berghei infection, contributes to the clearing of parasite ookinetes independent of melanization, an innate immune response which consists in the deposition of melanin pigments on invading pathogens and parasites. May play a role in non-septic wound healing. The sequence is that of CLIP domain-containing serine protease B14 from Anopheles gambiae (African malaria mosquito).